The chain runs to 270 residues: Inositol monophosphatase (270 aa).

Mg(2+) contacts are provided by E71, D91, L93, and D94. E71 is a binding site for substrate. Residues 93-96 (LDGT), 194-196 (GSC), E213, and D221 each bind substrate. D221 contributes to the Mg(2+) binding site.

This sequence belongs to the inositol monophosphatase superfamily. Mg(2+) is required as a cofactor.

The enzyme catalyses a myo-inositol phosphate + H2O = myo-inositol + phosphate. The protein operates within polyol metabolism; myo-inositol biosynthesis; myo-inositol from D-glucose 6-phosphate: step 2/2. With respect to regulation, inhibited by Li(+). Its function is as follows. Responsible for the provision of inositol required for synthesis of phosphatidylinositol and polyphosphoinositides. This Mesembryanthemum crystallinum (Common ice plant) protein is Inositol monophosphatase (IMP1).